The chain runs to 27 residues: Secretin (27 aa).

Met27 is modified (methionine amide).

It belongs to the glucagon family.

The protein localises to the secreted. Functionally, hormone involved in different processes, such as regulation of the pH of the duodenal content, food intake and water homeostasis. Exerts its biological effects by binding to secretin receptor (SCTR), a G-protein coupled receptor expressed in the basolateral domain of several cells. The protein is Secretin of Gallus gallus (Chicken).